The chain runs to 445 residues: Methylenetetrahydrofolate--tRNA-(uracil-5-)-methyltransferase TrmFO (445 aa).

10 to 15 (GGGLSG) is a binding site for FAD.

Belongs to the MnmG family. TrmFO subfamily. The cofactor is FAD.

The protein resides in the cytoplasm. The catalysed reaction is uridine(54) in tRNA + (6R)-5,10-methylene-5,6,7,8-tetrahydrofolate + NADH + H(+) = 5-methyluridine(54) in tRNA + (6S)-5,6,7,8-tetrahydrofolate + NAD(+). The enzyme catalyses uridine(54) in tRNA + (6R)-5,10-methylene-5,6,7,8-tetrahydrofolate + NADPH + H(+) = 5-methyluridine(54) in tRNA + (6S)-5,6,7,8-tetrahydrofolate + NADP(+). In terms of biological role, catalyzes the folate-dependent formation of 5-methyl-uridine at position 54 (M-5-U54) in all tRNAs. In Lawsonia intracellularis (strain PHE/MN1-00), this protein is Methylenetetrahydrofolate--tRNA-(uracil-5-)-methyltransferase TrmFO.